Reading from the N-terminus, the 374-residue chain is Probable quinol oxidase subunit 2 (374 aa).

An N-terminal signal peptide occupies residues Met1–Gly19. The N-palmitoyl cysteine moiety is linked to residue Cys20. Cys20 is lipidated: S-diacylglycerol cysteine. The next 2 helical transmembrane spans lie at Ser43 to Phe63 and Ile82 to Val102. The segment at Glu317 to His374 is disordered. The span at Glu330–His374 shows a compositional bias: basic and acidic residues.

This sequence belongs to the cytochrome c oxidase subunit 2 family.

It is found in the cell membrane. The enzyme catalyses 2 a quinol + O2 = 2 a quinone + 2 H2O. Its function is as follows. Catalyzes quinol oxidation with the concomitant reduction of oxygen to water. Subunit II transfers the electrons from a quinol to the binuclear center of the catalytic subunit I. In Staphylococcus epidermidis (strain ATCC 12228 / FDA PCI 1200), this protein is Probable quinol oxidase subunit 2 (qoxA).